The primary structure comprises 510 residues: Internal alternative NAD(P)H-ubiquinone oxidoreductase A1, mitochondrial (510 aa).

The N-terminal 48 residues, 1–48 (MLWIKNLARISQTTSSSVGNVFRNPESYTLSSRFCTALQKQQVTDTVQ), are a transit peptide targeting the mitochondrion. 75 to 105 (RVLVLGSGWAGCRVLKGIDTSIYDVVCVSPR) provides a ligand contact to FAD. 242–278 (LHCVVVGGGPTGVEFSGELSDFIMKDVRQRYSHVKDD) serves as a coordination point for NAD(+). The Microbody targeting signal motif lies at 501-510 (FVFGRDISRI).

It belongs to the NADH dehydrogenase family. Requires FAD as cofactor. Expressed in seedlings, cotyledons, young leaves, stems and flowers and, to a lower extent, in roots and buds.

It is found in the mitochondrion inner membrane. The protein resides in the peroxisome. The catalysed reaction is a quinone + NADH + H(+) = a quinol + NAD(+). The enzyme catalyses a ubiquinone + NADH + H(+) = a ubiquinol + NAD(+). Alternative NADH-ubiquinone oxidoreductase which catalyzes the oxidation of mitochondrial NADH does not translocate protons across the inner mitochondrial membrane. The polypeptide is Internal alternative NAD(P)H-ubiquinone oxidoreductase A1, mitochondrial (NDA1) (Arabidopsis thaliana (Mouse-ear cress)).